The primary structure comprises 114 residues: Probable divalent-cation tolerance protein cutA homolog (114 aa).

The protein belongs to the CutA family. Homotrimer.

In Encephalitozoon cuniculi (strain GB-M1) (Microsporidian parasite), this protein is Probable divalent-cation tolerance protein cutA homolog.